A 380-amino-acid polypeptide reads, in one-letter code: Phospho-N-acetylmuramoyl-pentapeptide-transferase (380 aa).

9 consecutive transmembrane segments (helical) span residues 25–45 (RAAAAFVTALLVSFILGPAII), 70–90 (TTPTMGGLIILAATFAPVLLW), 98–118 (VLLAMAVTAWMGVIGFLDDYL), 142–162 (VLCGLGLGAYLLLSPISTLPG), 173–193 (VLVVPAVAWAAWLYIPWVTFI), 209–229 (GLSSGLVAIAVLTLGLFAYVL), 245–265 (GAGELTVFCAAVVGACIGFLW), 272–294 (QVFMGDTGSLALGGAVGAIAILL), and 357–377 (QVVVRFWIIGILCAILALSTL).

This sequence belongs to the glycosyltransferase 4 family. MraY subfamily. It depends on Mg(2+) as a cofactor.

The protein localises to the cell inner membrane. The catalysed reaction is UDP-N-acetyl-alpha-D-muramoyl-L-alanyl-gamma-D-glutamyl-meso-2,6-diaminopimeloyl-D-alanyl-D-alanine + di-trans,octa-cis-undecaprenyl phosphate = di-trans,octa-cis-undecaprenyl diphospho-N-acetyl-alpha-D-muramoyl-L-alanyl-D-glutamyl-meso-2,6-diaminopimeloyl-D-alanyl-D-alanine + UMP. Its pathway is cell wall biogenesis; peptidoglycan biosynthesis. Its function is as follows. Catalyzes the initial step of the lipid cycle reactions in the biosynthesis of the cell wall peptidoglycan: transfers peptidoglycan precursor phospho-MurNAc-pentapeptide from UDP-MurNAc-pentapeptide onto the lipid carrier undecaprenyl phosphate, yielding undecaprenyl-pyrophosphoryl-MurNAc-pentapeptide, known as lipid I. This Gemmatimonas aurantiaca (strain DSM 14586 / JCM 11422 / NBRC 100505 / T-27) protein is Phospho-N-acetylmuramoyl-pentapeptide-transferase.